The following is a 407-amino-acid chain: 1-deoxy-D-xylulose 5-phosphate reductoisomerase (407 aa).

Positions 25, 26, 27, 28, 53, and 136 each coordinate NADPH. Lysine 137 lines the 1-deoxy-D-xylulose 5-phosphate pocket. Glutamate 138 is a binding site for NADPH. Residue aspartate 162 participates in Mn(2+) binding. 4 residues coordinate 1-deoxy-D-xylulose 5-phosphate: serine 163, glutamate 164, serine 188, and histidine 211. A Mn(2+)-binding site is contributed by glutamate 164. Position 217 (glycine 217) interacts with NADPH. Positions 224, 229, 230, and 233 each coordinate 1-deoxy-D-xylulose 5-phosphate. Glutamate 233 is a binding site for Mn(2+).

Belongs to the DXR family. Mg(2+) serves as cofactor. Mn(2+) is required as a cofactor.

The catalysed reaction is 2-C-methyl-D-erythritol 4-phosphate + NADP(+) = 1-deoxy-D-xylulose 5-phosphate + NADPH + H(+). It functions in the pathway isoprenoid biosynthesis; isopentenyl diphosphate biosynthesis via DXP pathway; isopentenyl diphosphate from 1-deoxy-D-xylulose 5-phosphate: step 1/6. Its function is as follows. Catalyzes the NADPH-dependent rearrangement and reduction of 1-deoxy-D-xylulose-5-phosphate (DXP) to 2-C-methyl-D-erythritol 4-phosphate (MEP). The sequence is that of 1-deoxy-D-xylulose 5-phosphate reductoisomerase from Bradyrhizobium sp. (strain BTAi1 / ATCC BAA-1182).